Here is a 348-residue protein sequence, read N- to C-terminus: Phosphoribosylformylglycinamidine cyclo-ligase (348 aa).

The protein belongs to the AIR synthase family.

Its subcellular location is the cytoplasm. It carries out the reaction 2-formamido-N(1)-(5-O-phospho-beta-D-ribosyl)acetamidine + ATP = 5-amino-1-(5-phospho-beta-D-ribosyl)imidazole + ADP + phosphate + H(+). The protein operates within purine metabolism; IMP biosynthesis via de novo pathway; 5-amino-1-(5-phospho-D-ribosyl)imidazole from N(2)-formyl-N(1)-(5-phospho-D-ribosyl)glycinamide: step 2/2. In Cereibacter sphaeroides (strain ATCC 17023 / DSM 158 / JCM 6121 / CCUG 31486 / LMG 2827 / NBRC 12203 / NCIMB 8253 / ATH 2.4.1.) (Rhodobacter sphaeroides), this protein is Phosphoribosylformylglycinamidine cyclo-ligase.